The following is a 348-amino-acid chain: MLCPWRTANLGLLLILTIFLVAEAEGAAQPNNSLMLQTSKENHALASSSLCMDEKQITQNYSKVLAEVNTSWPVKMATNAVLCCPPIALRNLIIITWEIILRGQPSCTKAYKKETNETKETNCTDERITWVSRPDQNSDLQIRTVAITHDGYYRCIMVTPDGNFHRGYHLQVLVTPEVTLFQNRNRTAVCKAVAGKPAAHISWIPEGDCATKQEYWSNGTVTVKSTCHWEVHNVSTVTCHVSHLTGNKSLYIELLPVPGAKKSAKLYIPYIILTIIILTIVGFIWLLKVNGCRKYKLNKTESTPVVEEDEMQPYASYTEKNNPLYDTTNKVKASEALQSEVDTDLHTL.

Positions 1 to 24 are cleaved as a signal peptide; sequence MLCPWRTANLGLLLILTIFLVAEA. The Extracellular segment spans residues 29 to 265; the sequence is QPNNSLMLQT…PVPGAKKSAK (237 aa). 9 N-linked (GlcNAc...) asparagine glycosylation sites follow: N31, N60, N69, N116, N122, N185, N218, N233, and N247. 2 cysteine pairs are disulfide-bonded: C83–C155 and C107–C123. Positions 160-251 constitute an Ig-like C2-type domain; the sequence is PDGNFHRGYH…SHLTGNKSLY (92 aa). Intrachain disulfides connect C190–C239 and C209–C227. Residues 266-286 form a helical membrane-spanning segment; that stretch reads LYIPYIILTIIILTIVGFIWL. The Cytoplasmic segment spans residues 287–348; that stretch reads LKVNGCRKYK…SEVDTDLHTL (62 aa).

The protein belongs to the CD200R family. CD200 and CD200R1 interact via their respective N-terminal Ig-like domains. Interacts with Human herpesvirus 8 vOX2 protein. In terms of assembly, (Microbial infection) Interacts with human herpesvirus 8/HHV-8 protein vOX2/K14. Expressed in granulocytes, monocytes, most T-cells, neutrophils, basophils and a subset of NK, NKT and B-cells (at protein level). Expressed in bone marrow, lymph nodes, spleen, lung, liver, spinal cord, kidney. Expressed in monocyte-derived dendritic and mast cells.

The protein localises to the cell membrane. Its subcellular location is the secreted. In terms of biological role, inhibitory receptor for the CD200/OX2 cell surface glycoprotein. Limits inflammation by inhibiting the expression of pro-inflammatory molecules including TNF-alpha, interferons, and inducible nitric oxide synthase (iNOS) in response to selected stimuli. Also binds to HHV-8 K14 viral CD200 homolog with identical affinity and kinetics as the host CD200. In Homo sapiens (Human), this protein is Cell surface glycoprotein CD200 receptor 1 (CD200R1).